Here is a 450-residue protein sequence, read N- to C-terminus: D-inositol 3-phosphate glycosyltransferase (450 aa).

His-26 provides a ligand contact to 1D-myo-inositol 3-phosphate. Residues 32–33 (QP) and Gly-40 each bind UDP-N-acetyl-alpha-D-glucosamine. Residues 37–42 (DAGGMN), Lys-95, Tyr-128, Thr-152, and Arg-172 each bind 1D-myo-inositol 3-phosphate. Positions 246, 251, and 313 each coordinate UDP-N-acetyl-alpha-D-glucosamine. The Mg(2+) site is built by Tyr-322, Arg-323, and Ala-325. Glu-335 and Glu-343 together coordinate UDP-N-acetyl-alpha-D-glucosamine. Thr-349 is a Mg(2+) binding site.

Belongs to the glycosyltransferase group 1 family. MshA subfamily. As to quaternary structure, homodimer.

The enzyme catalyses 1D-myo-inositol 3-phosphate + UDP-N-acetyl-alpha-D-glucosamine = 1D-myo-inositol 2-acetamido-2-deoxy-alpha-D-glucopyranoside 3-phosphate + UDP + H(+). Its function is as follows. Catalyzes the transfer of a N-acetyl-glucosamine moiety to 1D-myo-inositol 3-phosphate to produce 1D-myo-inositol 2-acetamido-2-deoxy-glucopyranoside 3-phosphate in the mycothiol biosynthesis pathway. In Mycolicibacterium vanbaalenii (strain DSM 7251 / JCM 13017 / BCRC 16820 / KCTC 9966 / NRRL B-24157 / PYR-1) (Mycobacterium vanbaalenii), this protein is D-inositol 3-phosphate glycosyltransferase.